The primary structure comprises 31 residues: Cytolysin Oshem 2 (31 aa).

The protein resides in the secreted. It localises to the nematocyst. Its subcellular location is the target cell membrane. Cytolysin that shows weak hemolysis and weak myonecrosis. In Olindias sambaquiensis (Hydromedusa), this protein is Cytolysin Oshem 2.